We begin with the raw amino-acid sequence, 518 residues long: uncharacterized protein (518 aa).

The first 21 residues, 1–21 (MWKWKVILLFLAEMFVSGVNG), serve as a signal peptide directing secretion. N-linked (GlcNAc...) asparagine glycosylation is found at Asn-30, Asn-142, Asn-295, Asn-342, Asn-362, Asn-410, and Asn-503. Positions 389–517 (CPPFGITNSV…RGFWVSITPQ (129 aa)) constitute a CUB domain.

It is found in the secreted. This is an uncharacterized protein from Caenorhabditis elegans.